Reading from the N-terminus, the 541-residue chain is Zingiberene synthase (541 aa).

D295, D299, N439, S443, and E447 together coordinate Mg(2+). The DDXXD motif signature appears at 295–299 (DDIID).

Belongs to the terpene synthase family. It depends on Mg(2+) as a cofactor. The cofactor is Mn(2+).

The protein resides in the cytoplasm. The catalysed reaction is (2E,6E)-farnesyl diphosphate = alpha-zingiberene + diphosphate. It functions in the pathway secondary metabolite biosynthesis; terpenoid biosynthesis. Its function is as follows. Sesquiterpene synthase converting farnesyl diphosphate into two major products, zingiberene &gt; beta-sesquiphellandrene, and five minor products, 7-epi-sesquithujene, sesquisabinene A, (E)-alpha-bergamotene, (E)-beta-farnesene and beta-bisabolene. Can also accept geranyl diphosphate as substrate, producing nine monoterpenes, with myrcene, limonene and alpha-terpinolene as the major products. The polypeptide is Zingiberene synthase (TPS1) (Sorghum bicolor (Sorghum)).